The chain runs to 81 residues: ATP synthase subunit c, chloroplastic (81 aa).

2 helical membrane-spanning segments follow: residues 3-23 and 57-77; these read PIIS…ASIG and LAFM…LLFA.

It belongs to the ATPase C chain family. F-type ATPases have 2 components, F(1) - the catalytic core - and F(0) - the membrane proton channel. F(1) has five subunits: alpha(3), beta(3), gamma(1), delta(1), epsilon(1). F(0) has four main subunits: a(1), b(1), b'(1) and c(10-14). The alpha and beta chains form an alternating ring which encloses part of the gamma chain. F(1) is attached to F(0) by a central stalk formed by the gamma and epsilon chains, while a peripheral stalk is formed by the delta, b and b' chains.

Its subcellular location is the plastid. It localises to the chloroplast thylakoid membrane. F(1)F(0) ATP synthase produces ATP from ADP in the presence of a proton or sodium gradient. F-type ATPases consist of two structural domains, F(1) containing the extramembraneous catalytic core and F(0) containing the membrane proton channel, linked together by a central stalk and a peripheral stalk. During catalysis, ATP synthesis in the catalytic domain of F(1) is coupled via a rotary mechanism of the central stalk subunits to proton translocation. In terms of biological role, key component of the F(0) channel; it plays a direct role in translocation across the membrane. A homomeric c-ring of between 10-14 subunits forms the central stalk rotor element with the F(1) delta and epsilon subunits. This chain is ATP synthase subunit c, chloroplastic, found in Phaseolus vulgaris (Kidney bean).